Here is a 331-residue protein sequence, read N- to C-terminus: Ferredoxin--NADP reductase 2 (331 aa).

7 residues coordinate FAD: E37, Q45, Y50, V90, F124, D286, and T327.

It belongs to the ferredoxin--NADP reductase type 2 family. Homodimer. It depends on FAD as a cofactor.

It catalyses the reaction 2 reduced [2Fe-2S]-[ferredoxin] + NADP(+) + H(+) = 2 oxidized [2Fe-2S]-[ferredoxin] + NADPH. The sequence is that of Ferredoxin--NADP reductase 2 from Listeria innocua serovar 6a (strain ATCC BAA-680 / CLIP 11262).